The chain runs to 218 residues: Large ribosomal subunit protein uL3 (218 aa).

The tract at residues 121 to 163 (GYQKRHGFSRGPMTHGSKNHREPGSIGPGTTPGRIYPGKRMAG) is disordered.

It belongs to the universal ribosomal protein uL3 family. In terms of assembly, part of the 50S ribosomal subunit. Forms a cluster with proteins L14 and L19.

In terms of biological role, one of the primary rRNA binding proteins, it binds directly near the 3'-end of the 23S rRNA, where it nucleates assembly of the 50S subunit. In Parasynechococcus marenigrum (strain WH8102), this protein is Large ribosomal subunit protein uL3.